Consider the following 237-residue polypeptide: Protein GrpE (237 aa).

2 disordered regions span residues 24–56 (LILEDSEAEAGTSSGETAAEPSPDPGEALKQLQ) and 204–237 (SAGSPSSEPSPPAQATIEAGPENTPASPQNPQPS).

Belongs to the GrpE family. In terms of assembly, homodimer.

Its subcellular location is the cytoplasm. Participates actively in the response to hyperosmotic and heat shock by preventing the aggregation of stress-denatured proteins, in association with DnaK and GrpE. It is the nucleotide exchange factor for DnaK and may function as a thermosensor. Unfolded proteins bind initially to DnaJ; upon interaction with the DnaJ-bound protein, DnaK hydrolyzes its bound ATP, resulting in the formation of a stable complex. GrpE releases ADP from DnaK; ATP binding to DnaK triggers the release of the substrate protein, thus completing the reaction cycle. Several rounds of ATP-dependent interactions between DnaJ, DnaK and GrpE are required for fully efficient folding. In Synechococcus sp. (strain JA-2-3B'a(2-13)) (Cyanobacteria bacterium Yellowstone B-Prime), this protein is Protein GrpE.